Here is a 142-residue protein sequence, read N- to C-terminus: Large ribosomal subunit protein uL11 (142 aa).

The protein belongs to the universal ribosomal protein uL11 family. In terms of assembly, part of the ribosomal stalk of the 50S ribosomal subunit. Interacts with L10 and the large rRNA to form the base of the stalk. L10 forms an elongated spine to which L12 dimers bind in a sequential fashion forming a multimeric L10(L12)X complex. One or more lysine residues are methylated.

Functionally, forms part of the ribosomal stalk which helps the ribosome interact with GTP-bound translation factors. This is Large ribosomal subunit protein uL11 from Xanthomonas campestris pv. campestris (strain B100).